The chain runs to 670 residues: Methionine--tRNA ligase (670 aa).

Positions 14–24 match the 'HIGH' region motif; that stretch reads PYANGHLHLGH. Zn(2+) contacts are provided by cysteine 145, cysteine 148, cysteine 158, and cysteine 161. A 'KMSKS' region motif is present at residues 330–334; sequence KMSKS. Lysine 333 contacts ATP. In terms of domain architecture, tRNA-binding spans 570–670; the sequence is DFAKVDLRIA…AGALPGMKVK (101 aa).

It belongs to the class-I aminoacyl-tRNA synthetase family. MetG type 1 subfamily. In terms of assembly, homodimer. Zn(2+) is required as a cofactor.

It is found in the cytoplasm. It carries out the reaction tRNA(Met) + L-methionine + ATP = L-methionyl-tRNA(Met) + AMP + diphosphate. In terms of biological role, is required not only for elongation of protein synthesis but also for the initiation of all mRNA translation through initiator tRNA(fMet) aminoacylation. The polypeptide is Methionine--tRNA ligase (Legionella pneumophila (strain Paris)).